The primary structure comprises 88 residues: Sec-independent protein translocase protein TatA (88 aa).

Residues 1–21 (MGGISIWQLLIIAVIVVLLFG) form a helical membrane-spanning segment. The segment at 41-88 (KAMGDENQKETNNAEKTTNDADFDTKNLAQKTSTEEKSTTESKNKEQV) is disordered. Basic and acidic residues-rich tracts occupy residues 42-65 (AMGDENQKETNNAEKTTNDADFDT) and 73-88 (STEEKSTTESKNKEQV).

This sequence belongs to the TatA/E family. The Tat system comprises two distinct complexes: a TatABC complex, containing multiple copies of TatA, TatB and TatC subunits, and a separate TatA complex, containing only TatA subunits. Substrates initially bind to the TatABC complex, which probably triggers association of the separate TatA complex to form the active translocon.

The protein localises to the cell inner membrane. Its function is as follows. Part of the twin-arginine translocation (Tat) system that transports large folded proteins containing a characteristic twin-arginine motif in their signal peptide across membranes. TatA could form the protein-conducting channel of the Tat system. This is Sec-independent protein translocase protein TatA from Proteus mirabilis (strain HI4320).